The primary structure comprises 353 residues: Photosystem II protein D1 (353 aa).

Thr-2 is modified (N-acetylthreonine). Position 2 is a phosphothreonine (Thr-2). The next 3 membrane-spanning stretches (helical) occupy residues 29–46, 118–133, and 142–156; these read YIGW…TATS, HFLL…EWEL, and WIAV…AATA. His-118 contacts chlorophyll a. Tyr-126 provides a ligand contact to pheophytin a. [CaMn4O5] cluster is bound by residues Asp-170 and Glu-189. The chain crosses the membrane as a helical span at residues 197-218; that stretch reads FHMLGVAGVFGGSLFSAMHGSL. His-198 is a chlorophyll a binding site. Residues His-215 and 264–265 contribute to the a quinone site; that span reads SF. His-215 contacts Fe cation. His-272 is a binding site for Fe cation. A helical membrane pass occupies residues 274–288; sequence FLAAWPVVGIWFTAL. Residues His-332, Glu-333, Asp-342, and Ala-344 each contribute to the [CaMn4O5] cluster site. The propeptide occupies 345 to 353; the sequence is GVEVPSTNG.

This sequence belongs to the reaction center PufL/M/PsbA/D family. In terms of assembly, PSII is composed of 1 copy each of membrane proteins PsbA, PsbB, PsbC, PsbD, PsbE, PsbF, PsbH, PsbI, PsbJ, PsbK, PsbL, PsbM, PsbT, PsbX, PsbY, PsbZ, Psb30/Ycf12, at least 3 peripheral proteins of the oxygen-evolving complex and a large number of cofactors. It forms dimeric complexes. Requires The D1/D2 heterodimer binds P680, chlorophylls that are the primary electron donor of PSII, and subsequent electron acceptors. It shares a non-heme iron and each subunit binds pheophytin, quinone, additional chlorophylls, carotenoids and lipids. D1 provides most of the ligands for the Mn4-Ca-O5 cluster of the oxygen-evolving complex (OEC). There is also a Cl(-1) ion associated with D1 and D2, which is required for oxygen evolution. The PSII complex binds additional chlorophylls, carotenoids and specific lipids. as cofactor. Tyr-161 forms a radical intermediate that is referred to as redox-active TyrZ, YZ or Y-Z. Post-translationally, C-terminally processed by CTPA; processing is essential to allow assembly of the oxygen-evolving complex and thus photosynthetic growth.

Its subcellular location is the plastid. It is found in the chloroplast thylakoid membrane. The enzyme catalyses 2 a plastoquinone + 4 hnu + 2 H2O = 2 a plastoquinol + O2. Photosystem II (PSII) is a light-driven water:plastoquinone oxidoreductase that uses light energy to abstract electrons from H(2)O, generating O(2) and a proton gradient subsequently used for ATP formation. It consists of a core antenna complex that captures photons, and an electron transfer chain that converts photonic excitation into a charge separation. The D1/D2 (PsbA/PsbD) reaction center heterodimer binds P680, the primary electron donor of PSII as well as several subsequent electron acceptors. The sequence is that of Photosystem II protein D1 from Morus indica (Mulberry).